The following is a 334-amino-acid chain: Tetraacyldisaccharide 4'-kinase (334 aa).

An ATP-binding site is contributed by 60 to 67 (TVGGTGKT).

Belongs to the LpxK family.

It catalyses the reaction a lipid A disaccharide + ATP = a lipid IVA + ADP + H(+). It participates in glycolipid biosynthesis; lipid IV(A) biosynthesis; lipid IV(A) from (3R)-3-hydroxytetradecanoyl-[acyl-carrier-protein] and UDP-N-acetyl-alpha-D-glucosamine: step 6/6. In terms of biological role, transfers the gamma-phosphate of ATP to the 4'-position of a tetraacyldisaccharide 1-phosphate intermediate (termed DS-1-P) to form tetraacyldisaccharide 1,4'-bis-phosphate (lipid IVA). This Stutzerimonas stutzeri (strain A1501) (Pseudomonas stutzeri) protein is Tetraacyldisaccharide 4'-kinase.